A 171-amino-acid chain; its full sequence is MERLKTKIRDIPDFPKPGVLFKDITPLVGDPATLRLAVHQLLHPFLEQDITAVGGIEARGFIFGALVAWELGVGFIPLRKSGKLPYEVRSISYQLEYGSASLEAHTDSLGPGDNVLLVDDLLATGGTAKASCELVESLGATVAACAFVIELDFLHGRERLSDYTVHSLVHY.

The protein belongs to the purine/pyrimidine phosphoribosyltransferase family. Homodimer.

It is found in the cytoplasm. It carries out the reaction AMP + diphosphate = 5-phospho-alpha-D-ribose 1-diphosphate + adenine. It functions in the pathway purine metabolism; AMP biosynthesis via salvage pathway; AMP from adenine: step 1/1. In terms of biological role, catalyzes a salvage reaction resulting in the formation of AMP, that is energically less costly than de novo synthesis. In Nitrosococcus oceani (strain ATCC 19707 / BCRC 17464 / JCM 30415 / NCIMB 11848 / C-107), this protein is Adenine phosphoribosyltransferase.